The sequence spans 161 residues: Allophycocyanin beta chain (161 aa).

N4-methylasparagine is present on N71. C81 is a (2R,3E)-phycocyanobilin binding site.

This sequence belongs to the phycobiliprotein family. Heterodimer of an alpha and a beta chain. Contains one covalently linked phycocyanobilin chromophore.

The protein resides in the cellular thylakoid membrane. In terms of biological role, light-harvesting photosynthetic bile pigment-protein from the phycobiliprotein complex. Allophycocyanin has a maximum absorption at approximately 650 nanometers. The protein is Allophycocyanin beta chain (apcB) of Synechocystis sp. (strain ATCC 27184 / PCC 6803 / Kazusa).